The primary structure comprises 91 residues: ATP synthase subunit c (91 aa).

2 consecutive transmembrane segments (helical) span residues Phe4–Ile24 and Ile53–Leu73.

It belongs to the ATPase C chain family. As to quaternary structure, F-type ATPases have 2 components, F(1) - the catalytic core - and F(0) - the membrane proton channel. F(1) has five subunits: alpha(3), beta(3), gamma(1), delta(1), epsilon(1). F(0) has three main subunits: a(1), b(2) and c(10-14). The alpha and beta chains form an alternating ring which encloses part of the gamma chain. F(1) is attached to F(0) by a central stalk formed by the gamma and epsilon chains, while a peripheral stalk is formed by the delta and b chains.

The protein localises to the cell inner membrane. Its function is as follows. F(1)F(0) ATP synthase produces ATP from ADP in the presence of a proton or sodium gradient. F-type ATPases consist of two structural domains, F(1) containing the extramembraneous catalytic core and F(0) containing the membrane proton channel, linked together by a central stalk and a peripheral stalk. During catalysis, ATP synthesis in the catalytic domain of F(1) is coupled via a rotary mechanism of the central stalk subunits to proton translocation. Functionally, key component of the F(0) channel; it plays a direct role in translocation across the membrane. A homomeric c-ring of between 10-14 subunits forms the central stalk rotor element with the F(1) delta and epsilon subunits. The protein is ATP synthase subunit c of Geobacter sulfurreducens (strain ATCC 51573 / DSM 12127 / PCA).